Consider the following 497-residue polypeptide: Probable FAD-binding monooxygenase AlmA (497 aa).

Residues 4-24 form a helical membrane-spanning segment; sequence QVDVLIIGAGISGIGLAVHLS. Residues Ser-15, Glu-36, Asp-56, Phe-62, and Val-104 each coordinate FAD. 54-56 is a binding site for NADP(+); the sequence is RSD. NADP(+) is bound by residues 184–190, 208–209, and 292–293; these read SGATAIT, RS, and RL. Val-395 is an FAD binding site.

Belongs to the FAD-binding monooxygenase family. FAD is required as a cofactor.

The protein localises to the cell membrane. It participates in hydrocarbon metabolism; alkane degradation. Functionally, is involved in the degradation of n-alkanes with C chain lengths of 32 and longer. Allows Acinetobacter sp. strain DSM 17874 to grow on long-chain n-alkanes such as dotriacontane (C32H66) or hexatriacontane (C36H74) as a sole carbon source. The chain is Probable FAD-binding monooxygenase AlmA from Acinetobacter sp.